A 508-amino-acid polypeptide reads, in one-letter code: MARSVLSALSELRETRLEKAQALKELGNGPYALRFESSHSTANLQADHADLAKGEERLLTVSVAGRVMTRRVMGKLAFYTLADETGTIQLYLEKATIDAAASNELASGTFVQLTTLVDAGDWIGVTGVLRRTDRGELSVKVQQWQILSKSLQPLPDKWHGLADVEKRYRQRYLDLIVSPQSRETFRRRALMVSAIRRWLDDRAFLEIETPVLQAEAGGAEARPFITHHNTLDLPLYLRIATELHLKRLVVGGFERVYELGRIFRNEGMSTRHNPEFTSVEVYQAYADYIDMMVLTEQLISSVCTQICGSTRITYQGIEIDLTPPWRRASMHELVQEATGLDFMGFKDLAVAASAMARVGLEVPSKADSVGRLLNEAFEQAVEVSLIQPTFVLDYPIEISPLARQHRSKPGLVERFELFIVGRETANAFSELIDPLDQRQRLEAQQARRQAGDLEAHGVDEDFLQALEVGMPPTGGLGIGIDRLVMLFTDSPSIRDVIAFPLLRPELKT.

Residues E416 and E423 each contribute to the Mg(2+) site.

Belongs to the class-II aminoacyl-tRNA synthetase family. In terms of assembly, homodimer. The cofactor is Mg(2+).

Its subcellular location is the cytoplasm. The catalysed reaction is tRNA(Lys) + L-lysine + ATP = L-lysyl-tRNA(Lys) + AMP + diphosphate. This is Lysine--tRNA ligase from Prochlorococcus marinus (strain MIT 9313).